Here is a 1240-residue protein sequence, read N- to C-terminus: Stress response protein NST1 (1240 aa).

Over residues 1 to 20 (MPPNSKSKRRKNKSKQHNKK) the composition is skewed to basic residues. The segment at 1-76 (MPPNSKSKRR…EPINTDDDKK (76 aa)) is disordered. Over residues 25 to 34 (DPEQSINPTQ) the composition is skewed to polar residues. The segment covering 39–48 (MEPELYHTES) has biased composition (basic and acidic residues). Ser-266 is subject to Phosphoserine. 5 disordered regions span residues 446–593 (SQSK…DRLE), 634–744 (EKRK…RIRE), 951–980 (EMES…RKSF), 998–1029 (DTSL…TAGN), and 1214–1240 (TATP…TQTS). Residues 457–487 (SIYEDEDEEDYDDYSEYAEDSEEVSEYEGIE) show a composition bias toward acidic residues. A compositionally biased stretch (basic and acidic residues) spans 488 to 513 (AVEKPEHDEKSNGIRETLHLSYDHDH). Over residues 514–524 (KRQNHPHHHYH) the composition is skewed to basic residues. The segment covering 558–587 (DILDGDEDEPEEEDENEGDDEEDTYDSGLD) has biased composition (acidic residues). Residues 616 to 777 (HEKQADNNRL…EDALRKQKLN (162 aa)) adopt a coiled-coil conformation. Polar residues predominate over residues 951 to 965 (EMESQAHKSSPQATM).

Belongs to the NST1 family. Interacts with MSL1.

It localises to the cytoplasm. In terms of biological role, with MSL1, acts as a negative regulator of salt tolerance. The polypeptide is Stress response protein NST1 (NST1) (Saccharomyces cerevisiae (strain ATCC 204508 / S288c) (Baker's yeast)).